Here is a 53-residue protein sequence, read N- to C-terminus: uncharacterized protein (53 aa).

The helical transmembrane segment at Leu24 to Leu44 threads the bilayer.

The protein resides in the membrane. This is an uncharacterized protein from Methanocaldococcus jannaschii (strain ATCC 43067 / DSM 2661 / JAL-1 / JCM 10045 / NBRC 100440) (Methanococcus jannaschii).